A 255-amino-acid chain; its full sequence is Electron transfer flavoprotein beta subunit lysine methyltransferase (255 aa).

Residues 1-32 (MAFSLCWKAPRSPWSFLQAVNNGSPLFLWRTV) constitute a mitochondrion transit peptide.

This sequence belongs to the methyltransferase superfamily. ETFBKMT family. In terms of assembly, interacts with HSPD1; this protein may possibly be a methylation substrate.

It localises to the cytoplasm. The protein resides in the mitochondrion matrix. It carries out the reaction L-lysyl-[protein] + 3 S-adenosyl-L-methionine = N(6),N(6),N(6)-trimethyl-L-lysyl-[protein] + 3 S-adenosyl-L-homocysteine + 3 H(+). Functionally, protein-lysine methyltransferase that selectively trimethylates the flavoprotein ETFB in mitochondria. Thereby, may negatively regulate the function of ETFB in electron transfer from Acyl-CoA dehydrogenases. This is Electron transfer flavoprotein beta subunit lysine methyltransferase from Mus musculus (Mouse).